The primary structure comprises 279 residues: Pantothenate synthetase (279 aa).

Met31 to His38 lines the ATP pocket. The Proton donor role is filled by His38. Gln62 is a binding site for (R)-pantoate. Gln62 is a beta-alanine binding site. Gly150 to Asp153 is an ATP binding site. A (R)-pantoate-binding site is contributed by Gln156. Residues Val179 and Lys187–Arg190 each bind ATP.

The protein belongs to the pantothenate synthetase family. Homodimer.

Its subcellular location is the cytoplasm. The catalysed reaction is (R)-pantoate + beta-alanine + ATP = (R)-pantothenate + AMP + diphosphate + H(+). It functions in the pathway cofactor biosynthesis; (R)-pantothenate biosynthesis; (R)-pantothenate from (R)-pantoate and beta-alanine: step 1/1. Its function is as follows. Catalyzes the condensation of pantoate with beta-alanine in an ATP-dependent reaction via a pantoyl-adenylate intermediate. This Stenotrophomonas maltophilia (strain R551-3) protein is Pantothenate synthetase.